A 149-amino-acid polypeptide reads, in one-letter code: Calmodulin (149 aa).

Position 2 is an N-acetylalanine (Ala-2). EF-hand domains follow at residues 8 to 43 (EQIAEFKEAFSLFDKDGDGTITTKELGTVMRSLGQN), 44 to 79 (PTEAELQDMINEVDADGNGTIDFPEFLSLMARKMKD), 81 to 116 (DTEEELIEAFKVFDRDGNGLISAAELRHVMTNLGEK), and 117 to 149 (LTDEEVDEMIREADIDGDGHINYEEFVRMMMAK). Residues Asp-21, Asp-23, Asp-25, Thr-27, Glu-32, Asp-57, Asp-59, Asn-61, Thr-63, Glu-68, Asp-94, Asp-96, Asn-98, and Glu-105 each coordinate Ca(2+). N6,N6,N6-trimethyllysine is present on Lys-116. 5 residues coordinate Ca(2+): Asp-130, Asp-132, Asp-134, His-136, and Glu-141.

Belongs to the calmodulin family.

Its function is as follows. Calmodulin mediates the control of a large number of enzymes, ion channels and other proteins by Ca(2+). Among the enzymes to be stimulated by the calmodulin-Ca(2+) complex are a number of protein kinases and phosphatases. The chain is Calmodulin from Tetrahymena pyriformis.